Reading from the N-terminus, the 305-residue chain is N-acetylmuramic acid 6-phosphate etherase (305 aa).

Residues 54–217 (AVPQLERGGR…SSALMVRLGK (164 aa)) form the SIS domain. The active-site Proton donor is the E82. Residue E113 is part of the active site.

This sequence belongs to the GCKR-like family. MurNAc-6-P etherase subfamily. As to quaternary structure, homodimer.

The catalysed reaction is N-acetyl-D-muramate 6-phosphate + H2O = N-acetyl-D-glucosamine 6-phosphate + (R)-lactate. Its pathway is amino-sugar metabolism; N-acetylmuramate degradation. Functionally, specifically catalyzes the cleavage of the D-lactyl ether substituent of MurNAc 6-phosphate, producing GlcNAc 6-phosphate and D-lactate. The polypeptide is N-acetylmuramic acid 6-phosphate etherase (Deinococcus radiodurans (strain ATCC 13939 / DSM 20539 / JCM 16871 / CCUG 27074 / LMG 4051 / NBRC 15346 / NCIMB 9279 / VKM B-1422 / R1)).